The chain runs to 535 residues: Arylsulfatase G (535 aa).

Residues 1-18 form the signal peptide; sequence MGWLFLKVLFLGVTFLGC. Residues aspartate 44, aspartate 45, and cysteine 84 each coordinate Ca(2+). The active-site Nucleophile is cysteine 84. 3-oxoalanine (Cys) is present on cysteine 84. Residue asparagine 117 is glycosylated (N-linked (GlcNAc...) asparagine). Lysine 137 provides a ligand contact to substrate. Histidine 139 is an active-site residue. Serine 162 is a binding site for substrate. N-linked (GlcNAc...) asparagine glycosylation occurs at asparagine 215. Substrate is bound at residue histidine 251. Ca(2+) is bound by residues aspartate 302 and asparagine 303. 2 N-linked (GlcNAc...) asparagine glycosylation sites follow: asparagine 356 and asparagine 497.

This sequence belongs to the sulfatase family. Ca(2+) is required as a cofactor. Post-translationally, N-glycosylated with both high mannose and complex type sugars. In terms of processing, the conversion to 3-oxoalanine (also known as C-formylglycine, FGly), of a serine or cysteine residue in prokaryotes and of a cysteine residue in eukaryotes, is critical for catalytic activity. The 63-kDa precursor undergoes proteolytic processing in two steps, yielding two fragments in the first step (apparent molecular masses of 44 and 18 kDa). In the second step, the 44-kDa fragment is processed further to the 34- and 10-kDa chains. The 10-kDa chain is a cleavage product of the 44-kDa fragment but linked to the 18-kDa chain through a disulfide bridge.

It localises to the lysosome. It catalyses the reaction an aryl sulfate + H2O = a phenol + sulfate + H(+). The enzyme catalyses Hydrolysis of the 3-sulfate groups of the N-sulfo-D-glucosamine 3-O-sulfate units of heparin.. Functionally, displays arylsulfatase activity with pseudosubstrates at acidic pH, such as p-nitrocatechol sulfate. Catalyzes the hydrolysis of the 3-sulfate groups of the N-sulfo-D-glucosamine 3-O-sulfate units of heparin. This chain is Arylsulfatase G (ARSG), found in Canis lupus familiaris (Dog).